A 640-amino-acid chain; its full sequence is ATP-dependent rRNA helicase spb4 (640 aa).

Positions 14 to 42 (WDAVTPALSEWVLEAMSSMGFTRMTPVQA) match the Q motif motif. Residues 45–249 (IPLFMAHKDV…RVGLRNPVKV (205 aa)) form the Helicase ATP-binding domain. 58–65 (AVTGSGKT) contacts ATP. Residues 197–200 (DEAD) carry the DEAD box motif. Positions 283–437 (ALKRILSSVQ…LITFSDADAA (155 aa)) constitute a Helicase C-terminal domain. Residues 521 to 629 (AYKDKQREKR…AAKAAGAKAD (109 aa)) adopt a coiled-coil conformation. Disordered stretches follow at residues 531–595 (RKEL…EKQK) and 607–640 (RKKN…QGFD). Residues 568-582 (KKLKRREQKKSKHEK) show a composition bias toward basic residues. A compositionally biased stretch (basic and acidic residues) spans 583-595 (ARWEKMTEEEKQK). Residues 630 to 640 (GDDEEEFQGFD) are compositionally biased toward acidic residues.

Belongs to the DEAD box helicase family. DDX55/SPB4 subfamily. Component of pre-60S ribosomal complexes.

It is found in the nucleus. It localises to the nucleolus. It carries out the reaction ATP + H2O = ADP + phosphate + H(+). ATP-binding RNA helicase involved in the biogenesis of 60S ribosomal subunits. Binds 90S pre-ribosomal particles and dissociates from pre-60S ribosomal particles after processing of 27SB pre-rRNA. Required for the normal formation of 18S rRNA through the processing of pre-rRNAs at sites A0, A1 and A2, and the normal formation of 25S and 5.8S rRNAs through the processing of pre-rRNAs at sites C1 and C2. The polypeptide is ATP-dependent rRNA helicase spb4 (Neosartorya fischeri (strain ATCC 1020 / DSM 3700 / CBS 544.65 / FGSC A1164 / JCM 1740 / NRRL 181 / WB 181) (Aspergillus fischerianus)).